The chain runs to 131 residues: Interleukin-13 (131 aa).

Residues methionine 1–alanine 18 form the signal peptide. N-linked (GlcNAc...) asparagine glycosylation is found at asparagine 42, asparagine 52, and asparagine 75. 2 disulfides stabilise this stretch: cysteine 51–cysteine 79 and cysteine 67–cysteine 93.

The protein belongs to the IL-4/IL-13 family. Interacts with IL13RA2.

The protein localises to the secreted. Cytokine that plays important roles in allergic inflammation and immune response to parasite infection. Synergizes with IL2 in regulating interferon-gamma synthesis. Stimulates B-cell proliferation, and activation of eosinophils, basophils, and mast cells. Plays an important role in controlling IL33 activity by modulating the production of transmembrane and soluble forms of interleukin-1 receptor-like 1/IL1RL1. Displays the capacity to antagonize Th1-driven proinflammatory immune response and downregulates synthesis of many proinflammatory cytokines including IL1, IL6, IL10, IL12 and TNF-alpha through a mechanism that partially involves suppression of NF-kappa-B. Also functions on nonhematopoietic cells, including endothelial cells where it induces vascular cell adhesion protein 1/VCAM1, which is important in the recruitment of eosinophils. Exerts its biological effects through its receptors which comprises the IL4R chain and the IL13RA1 chain, to activate JAK1 and TYK2, leading to the activation of STAT6. Aside from IL13RA1, another receptor IL13RA2 acts as a high affinity decoy for IL13 and mediates internalization and depletion of extracellular IL13. In Mus musculus (Mouse), this protein is Interleukin-13 (Il13).